We begin with the raw amino-acid sequence, 93 residues long: UPF0358 protein lin1058 (93 aa).

This sequence belongs to the UPF0358 family.

The protein is UPF0358 protein lin1058 of Listeria innocua serovar 6a (strain ATCC BAA-680 / CLIP 11262).